Here is a 131-residue protein sequence, read N- to C-terminus: UPF0102 protein YraN (131 aa).

Over residues 1–19 the composition is skewed to polar residues; sequence MATVPTRSGSPRQLTTKQT. Residues 1-20 form a disordered region; the sequence is MATVPTRSGSPRQLTTKQTG.

Belongs to the UPF0102 family.

This chain is UPF0102 protein YraN, found in Escherichia coli O157:H7.